Here is a 276-residue protein sequence, read N- to C-terminus: 2-dehydro-3-deoxyphosphooctonate aldolase (276 aa).

This sequence belongs to the KdsA family.

Its subcellular location is the cytoplasm. The catalysed reaction is D-arabinose 5-phosphate + phosphoenolpyruvate + H2O = 3-deoxy-alpha-D-manno-2-octulosonate-8-phosphate + phosphate. The protein operates within carbohydrate biosynthesis; 3-deoxy-D-manno-octulosonate biosynthesis; 3-deoxy-D-manno-octulosonate from D-ribulose 5-phosphate: step 2/3. Its pathway is bacterial outer membrane biogenesis; lipopolysaccharide biosynthesis. The protein is 2-dehydro-3-deoxyphosphooctonate aldolase of Xylella fastidiosa (strain M23).